Here is a 352-residue protein sequence, read N- to C-terminus: N-acetyl-gamma-glutamyl-phosphate reductase (352 aa).

The protein belongs to the NAGSA dehydrogenase family. Type 1 subfamily.

It localises to the cytoplasm. The enzyme catalyses N-acetyl-L-glutamate 5-semialdehyde + phosphate + NADP(+) = N-acetyl-L-glutamyl 5-phosphate + NADPH + H(+). It participates in amino-acid biosynthesis; L-arginine biosynthesis; N(2)-acetyl-L-ornithine from L-glutamate: step 3/4. In terms of biological role, catalyzes the NADPH-dependent reduction of N-acetyl-5-glutamyl phosphate to yield N-acetyl-L-glutamate 5-semialdehyde. In Nostoc ellipsosporum, this protein is N-acetyl-gamma-glutamyl-phosphate reductase.